The sequence spans 141 residues: MLLGTFNITLDAKNRISLPAKLRAFFEGSIVINRGFENCLEVRKPQDFQKYFEQFNSFPSTQKDTRTLKRLIFANANFVDVDTAGRVLIPNNLINDAKLDKEIVLIGQFDHLEIWDKKLYEDYLANSESLETVAERMKDVK.

SpoVT-AbrB domains follow at residues 5-47 (TFNI…KPQD) and 76-119 (ANFV…DKKL).

The protein belongs to the MraZ family. Homooctamer. Forms a ring.

It is found in the cytoplasm. The protein resides in the nucleoid. The polypeptide is Transcriptional regulator MraZ (Mycoplasma pneumoniae (strain ATCC 29342 / M129 / Subtype 1) (Mycoplasmoides pneumoniae)).